The primary structure comprises 526 residues: G-protein coupled receptor 161 (526 aa).

At 1–27 (MNGSKNGTAVANSTNGLDDNGLMVLES) the chain is on the extracellular side. N-linked (GlcNAc...) asparagine glycosylation is found at Asn2, Asn6, and Asn12. A helical transmembrane segment spans residues 28-48 (VSIIIIAILACLGNLVIVVTL). The Cytoplasmic segment spans residues 49 to 60 (YKKPYLLTPSNK). The chain crosses the membrane as a helical span at residues 61-81 (FVFSLTSSNLLLSVLMLPFVV). Topologically, residues 82–98 (ASSVRRDWMFGVVWCNF) are extracellular. Cys96 and Cys174 are oxidised to a cystine. N-linked (GlcNAc...) asparagine glycosylation is present at Asn97. The chain crosses the membrane as a helical span at residues 99–119 (TALLHLLVSSSSMLTLGAIAI). Residues 120–139 (DRYYAVLYPMIYPMKITGNR) are Cytoplasmic-facing. A helical transmembrane segment spans residues 140 to 160 (AVLAIVYIWLHSLVGCLPPLF). Over 161-186 (GWSSFEFDRFKWTCTVSWHKEISYTA) the chain is Extracellular. The helical transmembrane segment at 187–207 (FWVTWCCLLPLVAMLVCYGVI) threads the bilayer. The Cytoplasmic segment spans residues 208-263 (FRVARIKARKVYCGSVVVSQEESSSQNNGRKNSNTSTSSSGSRKSLIYSGSQCKAF). The interval 231–250 (SSQNNGRKNSNTSTSSSGSR) is disordered. A helical transmembrane segment spans residues 264–284 (ITILVVLGTFLTTWGPYVVVI). Residues 285 to 300 (STEALLGKNSVSPQVE) lie on the Extracellular side of the membrane. Residues 301 to 321 (TLVSWLSFTSAVCHPLIYGLW) traverse the membrane as a helical segment. At 322-526 (NKTVRKELLG…EEEMEREEKM (205 aa)) the chain is on the cytoplasmic side. Residues 505-526 (IDEGIVKDDDDDEEEMEREEKM) form a disordered region. Residues 512–526 (DDDDDEEEMEREEKM) show a composition bias toward acidic residues.

This sequence belongs to the G-protein coupled receptor 1 family.

The protein resides in the cell projection. It is found in the cilium membrane. The protein localises to the cell membrane. Functionally, key negative regulator of Shh signaling during neural tube development. Recruited to primary cilia and acts as a regulator of the PKA-dependent basal repression machinery in Shh signaling by increasing cAMP levels, leading to promote the PKA-dependent processing of gli3 into gli3r and repress the Shh signaling. In presence of shh, it is removed from primary cilia, preventing its activity and allowing activation of the Shh signaling. Required in left/right patterning by modulating Ca(2+) levels in the cells surrounding the Kupffer vesicle. In Danio rerio (Zebrafish), this protein is G-protein coupled receptor 161 (gpr161).